The sequence spans 406 residues: uncharacterized protein (406 aa).

The next 5 membrane-spanning stretches (helical) occupy residues 7–27, 31–51, 65–85, 92–112, and 191–211; these read LCTNPLIILIGTYMSIKYYLF, YFNIQFGLYVTFIISLLYGSV, LIFILHVLFVLICFSIKSEII, IFYFGFVKTIIISVVIGSFIL, and ISLIKMYLYSVIVPYAISSFF. The tract at residues 259–331 is disordered; that stretch reads TLNVPISTNN…TGTNNNVVDN (73 aa). Residues 262-291 are compositionally biased toward polar residues; that stretch reads VPISTNNTDNLNSVKTNQQFNTPVAKSNTK. The span at 292 to 303 shows a compositional bias: basic residues; that stretch reads SNRRKKTGKKIR. The span at 306–318 shows a compositional bias: low complexity; it reads NQTTSSNSSNNQS. Polar residues predominate over residues 319 to 330; that stretch reads PESTGTNNNVVD.

Its subcellular location is the membrane. This is an uncharacterized protein from Acanthamoeba polyphaga (Amoeba).